Reading from the N-terminus, the 542-residue chain is Global nitrogen regulator NrpR (542 aa).

Residues 12 to 77 (IEILDILSKS…VITERGLEEL (66 aa)) are winged helix-turn-helix. NRD regions lie at residues 85-320 (RLGS…KANI) and 321-542 (RIKT…YKEI).

It belongs to the NrpR family. In terms of assembly, homodimer.

Under nitrogen limitation, binding of the intracellular nitrogen metabolite 2-oxoglutarate to NrpR decreases the binding affinity of NrpR to DNA, leading to initiation of transcription. In terms of biological role, transcriptional repressor of nitrogen fixation and assimilation genes. Binds to two tandem operators in the glnA and nif promoters, thereby blocking transcription of the genes. The protein is Global nitrogen regulator NrpR of Methanocaldococcus jannaschii (strain ATCC 43067 / DSM 2661 / JAL-1 / JCM 10045 / NBRC 100440) (Methanococcus jannaschii).